The primary structure comprises 491 residues: UDP-N-acetylmuramoyl-L-alanyl-D-glutamate--2,6-diaminopimelate ligase (491 aa).

Ser30 contacts UDP-N-acetyl-alpha-D-muramoyl-L-alanyl-D-glutamate. Gly108–Thr114 contributes to the ATP binding site. UDP-N-acetyl-alpha-D-muramoyl-L-alanyl-D-glutamate is bound by residues Asn149, Thr150–Thr151, Ser177, Gln183, and Arg185. At Lys217 the chain carries N6-carboxylysine. Meso-2,6-diaminopimelate contacts are provided by residues Arg383, Asp407–Arg410, Gly458, and Glu462. The short motif at Asp407–Arg410 is the Meso-diaminopimelate recognition motif element.

This sequence belongs to the MurCDEF family. MurE subfamily. It depends on Mg(2+) as a cofactor. In terms of processing, carboxylation is probably crucial for Mg(2+) binding and, consequently, for the gamma-phosphate positioning of ATP.

It is found in the cytoplasm. The catalysed reaction is UDP-N-acetyl-alpha-D-muramoyl-L-alanyl-D-glutamate + meso-2,6-diaminopimelate + ATP = UDP-N-acetyl-alpha-D-muramoyl-L-alanyl-gamma-D-glutamyl-meso-2,6-diaminopimelate + ADP + phosphate + H(+). It functions in the pathway cell wall biogenesis; peptidoglycan biosynthesis. Catalyzes the addition of meso-diaminopimelic acid to the nucleotide precursor UDP-N-acetylmuramoyl-L-alanyl-D-glutamate (UMAG) in the biosynthesis of bacterial cell-wall peptidoglycan. The polypeptide is UDP-N-acetylmuramoyl-L-alanyl-D-glutamate--2,6-diaminopimelate ligase (Listeria monocytogenes serovar 1/2a (strain ATCC BAA-679 / EGD-e)).